The primary structure comprises 130 residues: Ribonuclease P protein component 2 (130 aa).

The protein belongs to the eukaryotic/archaeal RNase P protein component 2 family. In terms of assembly, consists of a catalytic RNA component and at least 4-5 protein subunits.

The protein resides in the cytoplasm. The catalysed reaction is Endonucleolytic cleavage of RNA, removing 5'-extranucleotides from tRNA precursor.. Its function is as follows. Part of ribonuclease P, a protein complex that generates mature tRNA molecules by cleaving their 5'-ends. This Methanococcus maripaludis (strain C7 / ATCC BAA-1331) protein is Ribonuclease P protein component 2.